We begin with the raw amino-acid sequence, 376 residues long: NAD(P)H-quinone oxidoreductase subunit 1, chloroplastic (376 aa).

9 helical membrane passes run 27 to 47 (LISI…GVLV), 65 to 85 (PEYA…KLLI), 97 to 117 (WLFS…YLVV), 130 to 150 (LGIF…LIAG), 166 to 186 (AAQS…ISLL), 251 to 271 (GIKF…SSLF), 272 to 292 (AVVL…IFFI), 310 to 330 (LIIP…FIFF), and 353 to 373 (FLLP…LTLF).

It belongs to the complex I subunit 1 family. As to quaternary structure, NDH is composed of at least 16 different subunits, 5 of which are encoded in the nucleus.

It is found in the plastid. The protein localises to the chloroplast thylakoid membrane. It catalyses the reaction a plastoquinone + NADH + (n+1) H(+)(in) = a plastoquinol + NAD(+) + n H(+)(out). The enzyme catalyses a plastoquinone + NADPH + (n+1) H(+)(in) = a plastoquinol + NADP(+) + n H(+)(out). NDH shuttles electrons from NAD(P)H:plastoquinone, via FMN and iron-sulfur (Fe-S) centers, to quinones in the photosynthetic chain and possibly in a chloroplast respiratory chain. The immediate electron acceptor for the enzyme in this species is believed to be plastoquinone. Couples the redox reaction to proton translocation, and thus conserves the redox energy in a proton gradient. The sequence is that of NAD(P)H-quinone oxidoreductase subunit 1, chloroplastic from Chara vulgaris (Common stonewort).